Consider the following 89-residue polypeptide: Co-chaperonin GroES (89 aa).

The protein belongs to the GroES chaperonin family. As to quaternary structure, heptamer of 7 subunits arranged in a ring. Interacts with the chaperonin GroEL.

The protein resides in the cytoplasm. Together with the chaperonin GroEL, plays an essential role in assisting protein folding. The GroEL-GroES system forms a nano-cage that allows encapsulation of the non-native substrate proteins and provides a physical environment optimized to promote and accelerate protein folding. GroES binds to the apical surface of the GroEL ring, thereby capping the opening of the GroEL channel. The protein is Co-chaperonin GroES of Pseudothermotoga lettingae (strain ATCC BAA-301 / DSM 14385 / NBRC 107922 / TMO) (Thermotoga lettingae).